The chain runs to 565 residues: UV-stimulated scaffold protein A homolog (565 aa).

The interval 11–156 is VHS-like; the sequence is RKNLNRILQE…VTLRKTKFVD (146 aa). Positions 155-215 form a coiled coil; that stretch reads VDYENGEKKI…ELETTMEMLV (61 aa). The segment at 441–468 adopts a UVSSA-type zinc-finger fold; sequence DRECLAKLPSGALCKRKDMFKCPLHGPL. Residues Cys-444, Cys-454, Cys-462, and His-465 each contribute to the Zn(2+) site. Residues 480-510 adopt a coiled-coil conformation; that stretch reads DEDRLKEIDRKERKRLKEAEEFSRKIVKEYE. 2 disordered regions span residues 510–530 and 542–565; these read ESKTKRKRKHEEETSVRSRLQ and VSADITSQQRSRLEKNFSHQFSHL.

Belongs to the UVSSA family.

The protein localises to the chromosome. Functionally, factor involved in transcription-coupled nucleotide excision repair (TC-NER) in response to UV damage. TC-NER allows RNA polymerase II-blocking lesions to be rapidly removed from the transcribed strand of active genes. This Caenorhabditis briggsae protein is UV-stimulated scaffold protein A homolog.